Consider the following 444-residue polypeptide: Orexin receptor type 2 (444 aa).

Basic and acidic residues predominate over residues M1–P10. Residues M1–E20 form a disordered region. Topologically, residues M1–E54 are extracellular. N-linked (GlcNAc...) asparagine glycans are attached at residues N14 and N22. Residues D33 to H49 form a required for response to orexin-A region. The helical transmembrane segment at W55–V75 threads the bilayer. The Cytoplasmic portion of the chain corresponds to C76–V88. Residues T89–A110 form a helical membrane-spanning segment. Residues T111–C127 are Extracellular-facing. A disulfide bond links C127 and C210. A helical membrane pass occupies residues K128 to L150. Topologically, residues D151–R170 are cytoplasmic. Residues N171–M191 traverse the membrane as a helical segment. The Extracellular segment spans residues E192–M222. The N-linked (GlcNAc...) asparagine glycan is linked to N202. Residues Y223–Y243 traverse the membrane as a helical segment. Over L244 to R304 the chain is Cytoplasmic. Residues M305–L326 form a helical membrane-spanning segment. Residue N324 participates in suvorexant binding. The Extracellular segment spans residues K327 to V342. A helical membrane pass occupies residues Y343–F366. The Cytoplasmic portion of the chain corresponds to L367 to W444.

It belongs to the G-protein coupled receptor 1 family.

The protein resides in the cell membrane. Functionally, nonselective, high-affinity receptor for both orexin-A and orexin-B neuropeptides. Triggers an increase in cytoplasmic Ca(2+) levels in response to orexin-A binding. This is Orexin receptor type 2 (HCRTR2) from Homo sapiens (Human).